Reading from the N-terminus, the 257-residue chain is MRKQVALVTGAAGGIGFEIAREFAREGASVIVSDLRPEACEKAASKLAEEGFDAAAIPYDVTKEAQVADTVNVIQKQYGRLDILVNNAGIQHVAPIEEFPTDTFEQLIKVMLTAPFIAMKHVFPIMKKQQFGRIINIASVNGLVGFAGKSAYNSAKHGVIGLTKVGALEGAPHGITVNALCPGYVDTQLVRNQLSDLSKTRNVPYDSVLEQVIFPLVPQKRLLSVKEIADYAVFLASEKAKGVTGQAVVLDGGYTAQ.

Positions 34, 60, 61, 87, 152, and 156 each coordinate NAD(+). Tyr152 serves as the catalytic Proton acceptor.

Belongs to the short-chain dehydrogenases/reductases (SDR) family.

This is an uncharacterized protein from Bacillus subtilis (strain 168).